Consider the following 122-residue polypeptide: Large ribosomal subunit protein uL14c (122 aa).

The protein belongs to the universal ribosomal protein uL14 family. Part of the 50S ribosomal subunit.

It is found in the plastid. The protein localises to the chloroplast. Functionally, binds to 23S rRNA. This is Large ribosomal subunit protein uL14c from Chloranthus spicatus (Chulantree).